We begin with the raw amino-acid sequence, 93 residues long: Translation initiation factor IF-1 (93 aa).

Residues Met1 to Lys72 enclose the S1-like domain. Positions Phe69–Arg93 are disordered.

The protein belongs to the IF-1 family. As to quaternary structure, component of the 30S ribosomal translation pre-initiation complex which assembles on the 30S ribosome in the order IF-2 and IF-3, IF-1 and N-formylmethionyl-tRNA(fMet); mRNA recruitment can occur at any time during PIC assembly.

The protein resides in the cytoplasm. Its function is as follows. One of the essential components for the initiation of protein synthesis. Stabilizes the binding of IF-2 and IF-3 on the 30S subunit to which N-formylmethionyl-tRNA(fMet) subsequently binds. Helps modulate mRNA selection, yielding the 30S pre-initiation complex (PIC). Upon addition of the 50S ribosomal subunit IF-1, IF-2 and IF-3 are released leaving the mature 70S translation initiation complex. The sequence is that of Translation initiation factor IF-1 from Nitrobacter hamburgensis (strain DSM 10229 / NCIMB 13809 / X14).